A 214-amino-acid polypeptide reads, in one-letter code: Large ribosomal subunit protein uL3 (214 aa).

Residues 131–155 (GAQRTSHGNSRSHRVPGSIGMAQDP) form a disordered region. An N5-methylglutamine modification is found at Gln153.

This sequence belongs to the universal ribosomal protein uL3 family. Part of the 50S ribosomal subunit. Forms a cluster with proteins L14 and L19. In terms of processing, methylated by PrmB.

In terms of biological role, one of the primary rRNA binding proteins, it binds directly near the 3'-end of the 23S rRNA, where it nucleates assembly of the 50S subunit. This Neisseria meningitidis serogroup C (strain 053442) protein is Large ribosomal subunit protein uL3.